We begin with the raw amino-acid sequence, 330 residues long: Malate dehydrogenase (330 aa).

Gly-12–Gly-18 lines the NAD(+) pocket. Arg-93 and Arg-99 together coordinate substrate. NAD(+)-binding positions include Asn-106, Gln-113, and Val-130–Asn-132. 2 residues coordinate substrate: Asn-132 and Arg-163. His-188 serves as the catalytic Proton acceptor.

It belongs to the LDH/MDH superfamily. MDH type 2 family.

It carries out the reaction (S)-malate + NAD(+) = oxaloacetate + NADH + H(+). Catalyzes the reversible oxidation of malate to oxaloacetate. In Legionella pneumophila (strain Lens), this protein is Malate dehydrogenase.